We begin with the raw amino-acid sequence, 304 residues long: Aspartate carbamoyltransferase catalytic subunit (304 aa).

2 residues coordinate carbamoyl phosphate: R56 and T57. L-aspartate is bound at residue K85. Residues R106, H134, and Q137 each contribute to the carbamoyl phosphate site. 2 residues coordinate L-aspartate: R167 and R226. Positions 265 and 266 each coordinate carbamoyl phosphate.

The protein belongs to the aspartate/ornithine carbamoyltransferase superfamily. ATCase family. In terms of assembly, heterooligomer of catalytic and regulatory chains.

The catalysed reaction is carbamoyl phosphate + L-aspartate = N-carbamoyl-L-aspartate + phosphate + H(+). Its pathway is pyrimidine metabolism; UMP biosynthesis via de novo pathway; (S)-dihydroorotate from bicarbonate: step 2/3. Its function is as follows. Catalyzes the condensation of carbamoyl phosphate and aspartate to form carbamoyl aspartate and inorganic phosphate, the committed step in the de novo pyrimidine nucleotide biosynthesis pathway. In Picrophilus torridus (strain ATCC 700027 / DSM 9790 / JCM 10055 / NBRC 100828 / KAW 2/3), this protein is Aspartate carbamoyltransferase catalytic subunit.